We begin with the raw amino-acid sequence, 355 residues long: MSLCTVEINLSTIKNNYLLLQDICKTSLVGAAVKANGYGLGAVQISKALIEENCRHFFVASSEEGVNLRNALGLDVNILVLNGVFEHDALELIEYNLTPVLNNLKQIEIWQKFSNLKNRLLSCYLHFNTGINRLGLSSDEIEQLINDRDLLKGLDLQYIISHLAISEEIDNPYNLEQLNRFKAYLQYFPNVKASLANSGGIFLGQDYHFDLARPGAALYGLNPLTKNPVTLKAPIIHLQNLTLDSHIGYNMTFTTKRDSVIATLPLGYADGFSRNFSNQGEVFINSRSVPIVGRVSMDLINIDVTDLPPSEIFLGQEAEIIGNYCTPDKIASIIGTIGYEVLTNLGSRYKRKYIG.

The Proton acceptor; specific for D-alanine role is filled by Lys34. Lys34 bears the N6-(pyridoxal phosphate)lysine mark. Arg133 provides a ligand contact to substrate. Tyr249 functions as the Proton acceptor; specific for L-alanine in the catalytic mechanism. Met297 is a binding site for substrate.

Belongs to the alanine racemase family. The cofactor is pyridoxal 5'-phosphate.

The catalysed reaction is L-alanine = D-alanine. Its pathway is amino-acid biosynthesis; D-alanine biosynthesis; D-alanine from L-alanine: step 1/1. Its function is as follows. Catalyzes the interconversion of L-alanine and D-alanine. May also act on other amino acids. The protein is Alanine racemase (alr) of Rickettsia africae (strain ESF-5).